We begin with the raw amino-acid sequence, 581 residues long: MKASQFFISTLKEAPADAEIVSHQLMMRAGLIKKLGAGIYNYMPMGLRVIRKVEAIVREEMNRAGAIEMSMPVIQPAELWQETGRFEAMGPELLRIKDRHGRDFVVQPTSEEVVTDVMRQDIRSYKQLPKNLYQIQTKFRDERRPRFGLMRGREFIMKDAYSFDRDQTAAKVSYQNMAEAYRRIFDRFGLTYRAVAADSGAIGGDLSEEFQVIAATGEDAIVYCPTSDYAANMEKAEALAPAGPRPEASQALAKTPTPGKATCADVAALLGIPLKTTVKSLVLATDLTNEAGEVVKTQVWLLLLRGDHDMNEIKVGKVPGLDASFRFASLAEIDDHFGCEPGYLGPLSLKKPVKLVVDREVAVMADWVCGANEADFHITGVNWSRDLPEPDLIADIRNVVAGDPSPDGKGLLAIERGIEVGHVFYLGTKYSRAMNATFLGENGKPQFLEMGCYGIGITRLPAAAIEQNHDERGIIWPDAIAPFTVVICPITPERFPDVKAAADKLYSELLGAGVDVILDDRGERPGAMFADWELIGVPHRVTIGDRGLKEGHIEYQHRRDTAASKVEAAAAFDFLKGKLAL.

Belongs to the class-II aminoacyl-tRNA synthetase family. ProS type 1 subfamily. As to quaternary structure, homodimer.

It localises to the cytoplasm. It carries out the reaction tRNA(Pro) + L-proline + ATP = L-prolyl-tRNA(Pro) + AMP + diphosphate. Functionally, catalyzes the attachment of proline to tRNA(Pro) in a two-step reaction: proline is first activated by ATP to form Pro-AMP and then transferred to the acceptor end of tRNA(Pro). As ProRS can inadvertently accommodate and process non-cognate amino acids such as alanine and cysteine, to avoid such errors it has two additional distinct editing activities against alanine. One activity is designated as 'pretransfer' editing and involves the tRNA(Pro)-independent hydrolysis of activated Ala-AMP. The other activity is designated 'posttransfer' editing and involves deacylation of mischarged Ala-tRNA(Pro). The misacylated Cys-tRNA(Pro) is not edited by ProRS. This Polaromonas naphthalenivorans (strain CJ2) protein is Proline--tRNA ligase.